The following is an 893-amino-acid chain: Pentatricopeptide repeat-containing protein At5g52850, chloroplastic (893 aa).

19 PPR repeats span residues 57–87 (NLDLCNNLLSLYLKTDGIWNARKLFDEMSHR), 88–122 (TVFAWTVMISAFTKSQEFASALSLFEEMMASGTHP), 123–157 (NEFTFSSVVRSCAGLRDISYGGRVHGSVIKTGFEG), 158–188 (NSVVGSSLSDLYSKCGQFKEACELFSSLQNA), 189–223 (DTISWTMMISSLVGARKWREALQFYSEMVKAGVPP), 224–257 (NEFTFVKLLGASSFLGLEFGKTIHSNIIVRGIPL), 258–288 (NVVLKTSLVDFYSQFSKMEDAVRVLNSSGEQ), 289–323 (DVFLWTSVVSGFVRNLRAKEAVGTFLEMRSLGLQP), 324–358 (NNFTYSAILSLCSAVRSLDFGKQIHSQTIKVGFED), 359–390 (STDVGNALVDMYMKCSASEVEASRVFGAMVSP), 391–425 (NVVSWTTLILGLVDHGFVQDCFGLLMEMVKREVEP), 426–460 (NVVTLSGVLRACSKLRHVRRVLEIHAYLLRRHVDG), 461–491 (EMVVGNSLVDAYASSRKVDYAWNVIRSMKRR), 492–526 (DNITYTSLVTRFNELGKHEMALSVINYMYGDGIRM), 527–561 (DQLSLPGFISASANLGALETGKHLHCYSVKSGFSG), 562–592 (AASVLNSLVDMYSKCGSLEDAKKVFEEIATP), 593–627 (DVVSWNGLVSGLASNGFISSALSAFEEMRMKETEP), 628–658 (DSVTFLILLSACSNGRLTDLGLEYFQVMKKI), and 664–694 (QVEHYVHLVGILGRAGRLEEATGVVETMHLK). The segment at 699–774 (IFKTLLRACR…KLGKSTVEVQ (76 aa)) is type E motif. A type E(+) motif region spans residues 775-806 (GKVHSFVSEDVTRVDKTNGIYAEIESIKEEIK). The interval 807–893 (RFGSPYRGNE…SCKREETSFV (87 aa)) is type DYW motif.

Belongs to the PPR family. PCMP-H subfamily.

The protein resides in the plastid. It localises to the chloroplast. This chain is Pentatricopeptide repeat-containing protein At5g52850, chloroplastic (PCMP-H31), found in Arabidopsis thaliana (Mouse-ear cress).